The following is a 347-amino-acid chain: MNIKVAIVGASGYAGGEILRLLLQHPLYLSGQLSIGALMGSSTVGQTVSELMPHLPELSDRVVEPTDVETLKSHDVVFLALPHGFSAEIAQQLPAEITVIDCAADFRLKDQKDWDAYYGGKHAGSWPYGIPEMPGHRDLIASSKRIAVPGCFPTGATLALLPAIAAHIIEPDVSVVSITGVSGAGKKASVAMLGAETMGSLKAYNVAGKHRHTPEISQNLSEYADQKIVVSFTPVLAPLPRGILTTATAKLTSGITLDEIREIYLNAYENEPFVHILPSGQQPQTQAVVGSNMCHIQVDADDNSKKLVVTSAIDNLTKGTAGAAVQCMNLSLGVSETSGLPCGGVAP.

Residue cysteine 151 is part of the active site.

Belongs to the NAGSA dehydrogenase family. Type 1 subfamily.

It localises to the cytoplasm. The catalysed reaction is N-acetyl-L-glutamate 5-semialdehyde + phosphate + NADP(+) = N-acetyl-L-glutamyl 5-phosphate + NADPH + H(+). It participates in amino-acid biosynthesis; L-arginine biosynthesis; N(2)-acetyl-L-ornithine from L-glutamate: step 3/4. Its function is as follows. Catalyzes the NADPH-dependent reduction of N-acetyl-5-glutamyl phosphate to yield N-acetyl-L-glutamate 5-semialdehyde. This is N-acetyl-gamma-glutamyl-phosphate reductase from Corynebacterium diphtheriae (strain ATCC 700971 / NCTC 13129 / Biotype gravis).